A 192-amino-acid polypeptide reads, in one-letter code: Glycerol-3-phosphate acyltransferase (192 aa).

Helical transmembrane passes span 1–21, 51–71, 78–98, 112–132, and 155–175; these read MTSA…GVLL, LGAV…VLAV, PTVH…PVWL, VLLV…VAVF, and LTAR…LMLW.

The protein belongs to the PlsY family. As to quaternary structure, probably interacts with PlsX.

Its subcellular location is the cell inner membrane. It carries out the reaction an acyl phosphate + sn-glycerol 3-phosphate = a 1-acyl-sn-glycero-3-phosphate + phosphate. Its pathway is lipid metabolism; phospholipid metabolism. In terms of biological role, catalyzes the transfer of an acyl group from acyl-phosphate (acyl-PO(4)) to glycerol-3-phosphate (G3P) to form lysophosphatidic acid (LPA). This enzyme utilizes acyl-phosphate as fatty acyl donor, but not acyl-CoA or acyl-ACP. This Myxococcus xanthus (strain DK1622) protein is Glycerol-3-phosphate acyltransferase.